Consider the following 664-residue polypeptide: uncharacterized protein (664 aa).

Residues 1–25 (MSWKRYLKWVSFAIIPLLFANTSIK) form the signal peptide. A helical transmembrane segment spans residues 625 to 645 (IIVYLIIGFSVLVLFITVFIY).

This sequence belongs to the MG414/MG415 family.

The protein localises to the cell membrane. This is an uncharacterized protein from Mycoplasma genitalium (strain ATCC 33530 / DSM 19775 / NCTC 10195 / G37) (Mycoplasmoides genitalium).